A 205-amino-acid chain; its full sequence is Ribosomal RNA small subunit methyltransferase G (205 aa).

S-adenosyl-L-methionine is bound by residues Gly-66, Phe-71, 119-120, and Arg-135; that span reads IE.

This sequence belongs to the methyltransferase superfamily. RNA methyltransferase RsmG family.

The protein resides in the cytoplasm. It catalyses the reaction guanosine(527) in 16S rRNA + S-adenosyl-L-methionine = N(7)-methylguanosine(527) in 16S rRNA + S-adenosyl-L-homocysteine. Specifically methylates the N7 position of guanine in position 527 of 16S rRNA. The protein is Ribosomal RNA small subunit methyltransferase G of Rhizobium rhizogenes (strain K84 / ATCC BAA-868) (Agrobacterium radiobacter).